A 1645-amino-acid chain; its full sequence is Histone-lysine N-methyltransferase set-26 (1645 aa).

Disordered regions lie at residues 1–82 (MADG…QQIP), 109–132 (EPAA…RPTE), 200–228 (DAVG…SVAP), 417–606 (TPEQ…VLRP), and 651–789 (TGQS…DEAA). 2 stretches are compositionally biased toward low complexity: residues 16–31 (EQPP…AEPI) and 67–82 (QEFY…QQIP). Polar residues predominate over residues 207 to 228 (PGTQYRRNQQTGGGLPSTSVAP). Low complexity-rich tracts occupy residues 429–443 (RQRA…AAQR) and 453–467 (RPGA…PSMA). The span at 559-578 (MTQEEKNAHFARLTTDKEKP) shows a compositional bias: basic and acidic residues. A compositionally biased stretch (pro residues) spans 592-603 (PHVPPPPPPPLV). Residues 651 to 675 (TGQSGSSAAARQRTVSGSAARAQTY) are compositionally biased toward polar residues. Composition is skewed to basic residues over residues 684–699 (QHHH…RHSS) and 731–741 (HRPRGRPKGTR). Residues 780-789 (SESEGIDEAA) show a composition bias toward acidic residues. A PHD-type zinc finger spans residues 794–842 (TMRCHCGMDHGDGDTIECEGCKTWQHMACMGLTLKSNTSKYKCEMCLPR). A disordered region spans residues 865 to 904 (AAKKQKRKSEPVEQKQKSQPSTSRKSAPMALQQQPAEPRV). Residues 881 to 899 (KSQPSTSRKSAPMALQQQP) are compositionally biased toward polar residues. One can recognise an SET domain in the interval 973 to 1064 (MSNEVKRQPG…RNTEVTLPFD (92 aa)). The segment covering 1099 to 1172 (RHRAMDHKKR…EAKERKKMEV (74 aa)) has biased composition (basic and acidic residues). Disordered regions lie at residues 1099 to 1333 (RHRA…SKNV), 1371 to 1536 (SGLL…STEG), and 1548 to 1645 (PLDD…TRWN). A coiled-coil region spans residues 1103–1217 (MDHKKREAEE…GKRKEARRRS (115 aa)). Over residues 1173–1183 (EASAAAAPESS) the composition is skewed to low complexity. The span at 1188–1210 (AREERRIQQAEEMFRRQEEEGKR) shows a compositional bias: basic and acidic residues. 2 stretches are compositionally biased toward polar residues: residues 1258-1268 (TTQPSTSSFAT) and 1300-1311 (TVATPKDTTASN). Basic and acidic residues-rich tracts occupy residues 1382 to 1427 (SEVR…KKAN), 1434 to 1450 (KSEK…EKKP), and 1468 to 1485 (KKTE…ESSS). Residues 1554-1565 (SSSNTAPTTTIA) show a composition bias toward polar residues.

It belongs to the class V-like SAM-binding methyltransferase superfamily. In terms of tissue distribution, expressed both in the germline and in somatic tissues.

It is found in the nucleus. The enzyme catalyses L-lysyl(9)-[histone H3] + 3 S-adenosyl-L-methionine = N(6),N(6),N(6)-trimethyl-L-lysyl(9)-[histone H3] + 3 S-adenosyl-L-homocysteine + 3 H(+). In terms of biological role, histone methyltransferase that mediates trimethylation of 'Lys-9' of histone H3 in vitro. Involved in transcriptional regulation. Plays a role in the negative regulation of lifespan and in heat resistance. Together with set-9, negatively regulates lifespan in a germline-independent, partially daf-16-dependent fashion. Together with set-9, plays a role in germline development and maintenance and might play a role in the restriction of the trimethylation mark on histone H3 'Lys-4'(H3K4me3) to target genes specifically in the germline. Together with spr-5, required for transgenerational fertility. This Caenorhabditis elegans protein is Histone-lysine N-methyltransferase set-26.